The following is a 610-amino-acid chain: UvrABC system protein C (610 aa).

Positions 16-94 (NQPGVYRMYD…IKRYQPRYNV (79 aa)) constitute a GIY-YIG domain. A UVR domain is found at 204–239 (SQVIDALVARMEEASRALRFEEAARLRDQIQAVRRV).

Belongs to the UvrC family. In terms of assembly, interacts with UvrB in an incision complex.

Its subcellular location is the cytoplasm. Its function is as follows. The UvrABC repair system catalyzes the recognition and processing of DNA lesions. UvrC both incises the 5' and 3' sides of the lesion. The N-terminal half is responsible for the 3' incision and the C-terminal half is responsible for the 5' incision. This is UvrABC system protein C from Edwardsiella ictaluri (strain 93-146).